The following is a 1375-amino-acid chain: Patatin-like phospholipase domain-containing protein 6 (1375 aa).

The segment at 1-20 (MEAPLQTGMMGTSSHGLATN) is disordered. The Lumenal portion of the chain corresponds to 1–59 (MEAPLQTGMMGTSSHGLATNSSGAKVAERDGFQDVLAPGEGSAGRICGAQPVPFVPQVL). Positions 9-20 (MMGTSSHGLATN) are enriched in polar residues. Asn-20 carries an N-linked (GlcNAc...) asparagine glycan. The helical transmembrane segment at 60–80 (GVMIGAGVAVVVTAVLILLVV) threads the bilayer. Residues 81–1375 (RRLRVPKTPA…QEPPGSATDA (1295 aa)) are Cytoplasmic-facing. An a nucleoside 3',5'-cyclic phosphate-binding site is contributed by 195-322 (VLGHFEKPLF…VRVVQIIMVR (128 aa)). 2 disordered regions span residues 352-436 (FPSP…RSDF) and 449-472 (LQEEASGGSLAAPARTPTQEPREQ). The residue at position 354 (Ser-354) is a Phosphoserine. The segment covering 359 to 376 (TRTSPVRGSKRMVSTSAT) has biased composition (polar residues). Thr-361 bears the Phosphothreonine mark. A phosphoserine mark is found at Ser-362 and Ser-372. Residues 384-398 (GRPPDPTGAPLPGPT) are compositionally biased toward pro residues. A Phosphoserine modification is found at Ser-420. Thr-464 is modified (phosphothreonine). A nucleoside 3',5'-cyclic phosphate contacts are provided by residues 511 to 633 (ELAK…VAAR) and 629 to 749 (TVAA…LSQK). Residues 981-1147 (LVLGGGGARG…INNLPADIAR (167 aa)) form the PNPLA domain. The GXGXXG motif lies at 985–990 (GGGARG). Positions 1012 to 1016 (GTSIG) match the GXSXG motif. The active-site Nucleophile is the Ser-1014. Asp-1134 functions as the Proton acceptor in the catalytic mechanism. Residues 1134-1136 (DGG) carry the DGA/G motif. The interval 1306-1375 (SYVSDGCADG…QEPPGSATDA (70 aa)) is disordered. Positions 1313-1329 (ADGEESDCLTEYEEDAG) are enriched in acidic residues.

This sequence belongs to the NTE family. In terms of processing, glycosylated. Expressed in brain, placenta, kidney, neuron and skeletal muscle. Expressed in the developing eye, pituitary and brain.

It is found in the endoplasmic reticulum membrane. The enzyme catalyses a 1-acyl-sn-glycero-3-phosphocholine + H2O = sn-glycerol 3-phosphocholine + a fatty acid + H(+). The catalysed reaction is 1-(9Z-octadecenoyl)-sn-glycero-3-phosphocholine + H2O = sn-glycerol 3-phosphocholine + (9Z)-octadecenoate + H(+). It carries out the reaction 1-hexadecanoylglycerol + H2O = glycerol + hexadecanoate + H(+). It catalyses the reaction 2-hexadecanoylglycerol + H2O = glycerol + hexadecanoate + H(+). The enzyme catalyses 1-(9Z-octadecenoyl)-glycerol + H2O = glycerol + (9Z)-octadecenoate + H(+). The catalysed reaction is 2-(9Z-octadecenoyl)-glycerol + H2O = glycerol + (9Z)-octadecenoate + H(+). It carries out the reaction 2-(5Z,8Z,11Z,14Z-eicosatetraenoyl)-glycerol + H2O = glycerol + (5Z,8Z,11Z,14Z)-eicosatetraenoate + H(+). It catalyses the reaction 1-hexadecanoyl-sn-glycero-3-phosphate + H2O = sn-glycerol 3-phosphate + hexadecanoate + H(+). The enzyme catalyses 1-hexadecanoyl-sn-glycero-3-phosphocholine + H2O = sn-glycerol 3-phosphocholine + hexadecanoate + H(+). Its activity is regulated as follows. Inhibited by a series a OPs such as mipafox (MPX), phenyl saligenin phosphate (PSP), phenyl dipentyl phosphinate (PDPP), diisopropyl fluorophosphate and paraoxon. Functionally, phospholipase B that deacylates intracellular phosphatidylcholine (PtdCho), generating glycerophosphocholine (GroPtdCho). This deacylation occurs at both sn-2 and sn-1 positions of PtdCho. Catalyzes the hydrolysis of several naturally occurring membrane-associated lipids. Hydrolyzes lysophospholipids and monoacylglycerols, preferring the 1-acyl to the 2-acyl isomer. Does not catalyze hydrolysis of di- or triacylglycerols or fatty acid amides. In Homo sapiens (Human), this protein is Patatin-like phospholipase domain-containing protein 6.